The chain runs to 856 residues: Subtilisin-like protease SBT2.2 (856 aa).

Positions 1–21 (MRRVLMVNFGVLLLFCFGVLS) are cleaved as a signal peptide. Residues 22-159 (NSFGQDNGGD…IVLDFSVRTA (138 aa)) constitute a propeptide, activation peptide. Residues Asn35 and Asn85 are each glycosylated (N-linked (GlcNAc...) asparagine). Residues 40–159 (VYIVTLRQAS…IVLDFSVRTA (120 aa)) enclose the Inhibitor I9 domain. One can recognise a Peptidase S8 domain in the interval 164–709 (PQFMGLPKGA…NGFVNATAAL (546 aa)). Asp193 (charge relay system) is an active-site residue. Residues Asn204 and Asn255 are each glycosylated (N-linked (GlcNAc...) asparagine). Residue His269 is the Charge relay system of the active site. Residues Asn412, Asn441, Asn495, Asn540, and Asn568 are each glycosylated (N-linked (GlcNAc...) asparagine). Residues 432–528 (MISALDALKN…MDMPGIIIPS (97 aa)) form the PA domain. The active-site Charge relay system is Ser634. N-linked (GlcNAc...) asparagine glycans are attached at residues Asn704, Asn730, Asn738, Asn748, Asn767, Asn782, and Asn823.

Belongs to the peptidase S8 family.

The protein localises to the secreted. In Arabidopsis thaliana (Mouse-ear cress), this protein is Subtilisin-like protease SBT2.2.